The sequence spans 1347 residues: Protocadherin-11 X-linked (1347 aa).

Positions 1–23 (MDLLSGTYIFAVLLACVVFHSGA) are cleaved as a signal peptide. The Extracellular segment spans residues 24–812 (QEKNYTIREE…VSSPTSDYVK (789 aa)). Cadherin domains are found at residues 26-139 (KNYT…APLF), 140-249 (PATV…HPVF), 250-355 (KETE…VPSI), 362-466 (NPIN…APVF), 467-570 (TQSF…SPVF), 571-673 (THNE…KPVF), and 677-795 (PSNY…APVT). Asn27, Asn48, and Asn54 each carry an N-linked (GlcNAc...) asparagine glycan. A glycan (N-linked (GlcNAc...) asparagine) is linked at Asn344. N-linked (GlcNAc...) asparagine glycosylation is present at Asn553. An N-linked (GlcNAc...) asparagine glycan is attached at Asn773. A helical transmembrane segment spans residues 813–833 (ILVAAVAGTVTVVVVIFITAV). The Cytoplasmic segment spans residues 834–1347 (VRCRQAPHLK…DSPIMEEHPL (514 aa)). Disordered stretches follow at residues 1031–1050 (IWIH…GKSQ), 1057–1091 (LPEG…GYPQ), 1097–1116 (RATP…ESTF), and 1325–1347 (TFTP…EHPL).

The protein localises to the cell membrane. Potential calcium-dependent cell-adhesion protein. The chain is Protocadherin-11 X-linked (PCDH11X) from Pongo pygmaeus (Bornean orangutan).